A 162-amino-acid chain; its full sequence is Protein-export protein SecB (162 aa).

This sequence belongs to the SecB family. As to quaternary structure, homotetramer, a dimer of dimers. One homotetramer interacts with 1 SecA dimer.

The protein localises to the cytoplasm. In terms of biological role, one of the proteins required for the normal export of preproteins out of the cell cytoplasm. It is a molecular chaperone that binds to a subset of precursor proteins, maintaining them in a translocation-competent state. It also specifically binds to its receptor SecA. This is Protein-export protein SecB from Pseudomonas savastanoi pv. phaseolicola (strain 1448A / Race 6) (Pseudomonas syringae pv. phaseolicola (strain 1448A / Race 6)).